A 471-amino-acid polypeptide reads, in one-letter code: MSVLKEYRTVSEVVGPLMIVDQVAGVHYNELVDITLHNGARRKGQVLEVQGDKAMVQLFEGSTGINLAKTKVRFTGHPLELAVSEDMVGRIFDGMGQPIDGGPELIPEKYLDIDGQAINPVARDYPDEFIQTGISAIDHLNTLVRGQKLPVFSGSGLPHNELAAQIARQATVLNSDDNFAVVFAAMGITFEEAEFFMNDLRETGAIDRSVLFINLANDPAIERIATPRIALTTAEYLAYEKGMHVLVIMTDMTNYCEALREVSAARREVPGRRGYPGYLYTNLSTLYERAGRLIGKKGSVTQIPILTMPEDDITHPIPDLTGYITEGQIILSQELYKNGFRPPINVLPSLSRLKDKGSGEGKTRQDHAATMNQLFAAYAQGKQAKELAVVLGESALSETDKLYVAFTNRFEEEYINQGFYTNRSIEESLDLGWELLSILPRTELKRIKDDMLDRYLPKADTTMTKVFVAND.

It belongs to the ATPase alpha/beta chains family.

In terms of biological role, produces ATP from ADP in the presence of a proton gradient across the membrane. The V-type beta chain is a regulatory subunit. This Streptococcus pyogenes serotype M18 (strain MGAS8232) protein is V-type ATP synthase beta chain.